Here is a 67-residue protein sequence, read N- to C-terminus: MNVTVMFLVLLLLTMPLTDGFNIRATNGGELFGPVQRDAGNVLDHGFQRRRECPPWCPTSHCNAGTC.

The N-terminal stretch at 1-20 is a signal peptide; that stretch reads MNVTVMFLVLLLLTMPLTDG. The propeptide occupies 21–48; it reads FNIRATNGGELFGPVQRDAGNVLDHGFQ.

Belongs to the conotoxin L superfamily. Post-translationally, contains 2 disulfide bonds. In terms of tissue distribution, expressed by the venom duct.

It is found in the secreted. The sequence is that of Conotoxin Cl14c from Californiconus californicus (California cone).